A 139-amino-acid chain; its full sequence is Holo-[acyl-carrier-protein] synthase (139 aa).

Mg(2+) contacts are provided by Asp8 and Glu57.

The protein belongs to the P-Pant transferase superfamily. AcpS family. It depends on Mg(2+) as a cofactor.

The protein resides in the cytoplasm. It catalyses the reaction apo-[ACP] + CoA = holo-[ACP] + adenosine 3',5'-bisphosphate + H(+). Its function is as follows. Transfers the 4'-phosphopantetheine moiety from coenzyme A to a Ser of acyl-carrier-protein. This Rhizobium meliloti (strain 1021) (Ensifer meliloti) protein is Holo-[acyl-carrier-protein] synthase.